Here is a 248-residue protein sequence, read N- to C-terminus: MGQKIQPHGLRLGITSDWRSRWYADKQYADYLAEDIKIREFLSEGLERAGIANVVIERTHDRVRVDIHTARPGIVIGRRGSEADRIRGKLEKLTGKQVQLNILEVKNVDANAQLVAQSIAEQLVNRVAFRRAMRKAIQGAMRQPQVKGIKVVCSGRLGGAEMGRTERYHEGRVPLHTLRAEIDYGTHEAHTTFGRIGVKVWIYKGDVVGGRRESLMNARDERPSRGGRRERPRRGGARRQRAEKKQEG.

Positions 38-106 (IREFLSEGLE…QVQLNILEVK (69 aa)) constitute a KH type-2 domain. A compositionally biased stretch (basic and acidic residues) spans 214–229 (SLMNARDERPSRGGRR). Residues 214-248 (SLMNARDERPSRGGRRERPRRGGARRQRAEKKQEG) are disordered. Residues 230 to 242 (ERPRRGGARRQRA) are compositionally biased toward basic residues.

The protein belongs to the universal ribosomal protein uS3 family. In terms of assembly, part of the 30S ribosomal subunit. Forms a tight complex with proteins S10 and S14.

In terms of biological role, binds the lower part of the 30S subunit head. Binds mRNA in the 70S ribosome, positioning it for translation. This chain is Small ribosomal subunit protein uS3, found in Corynebacterium urealyticum (strain ATCC 43042 / DSM 7109).